The following is an 82-amino-acid chain: Small ribosomal subunit protein bS16 (82 aa).

This sequence belongs to the bacterial ribosomal protein bS16 family.

This chain is Small ribosomal subunit protein bS16, found in Marinomonas sp. (strain MWYL1).